A 314-amino-acid polypeptide reads, in one-letter code: L-lactate dehydrogenase 1 (314 aa).

Residues V16, D37, K42, Y68, and 82–83 (GL) contribute to the NAD(+) site. Substrate is bound by residues Q85, R91, and 123–126 (NPVD). NAD(+) is bound by residues 121–123 (ATN) and S146. A substrate-binding site is contributed by 151-154 (DSAR). R156 and H171 together coordinate beta-D-fructose 1,6-bisphosphate. H178 (proton acceptor) is an active-site residue. Residue Y223 is modified to Phosphotyrosine. Residue T232 coordinates substrate.

Belongs to the LDH/MDH superfamily. LDH family. As to quaternary structure, homotetramer.

It localises to the cytoplasm. The catalysed reaction is (S)-lactate + NAD(+) = pyruvate + NADH + H(+). The protein operates within fermentation; pyruvate fermentation to lactate; (S)-lactate from pyruvate: step 1/1. Allosterically activated by fructose 1,6-bisphosphate (FBP). In terms of biological role, catalyzes the conversion of lactate to pyruvate. This is L-lactate dehydrogenase 1 from Bacillus cereus (strain ATCC 14579 / DSM 31 / CCUG 7414 / JCM 2152 / NBRC 15305 / NCIMB 9373 / NCTC 2599 / NRRL B-3711).